The following is a 59-amino-acid chain: Flagellar basal-body rod protein FlgC (59 aa).

The protein belongs to the flagella basal body rod proteins family. As to quaternary structure, the basal body constitutes a major portion of the flagellar organelle and consists of four rings (L,P,S, and M) mounted on a central rod. The rod consists of about 26 subunits of FlgG in the distal portion, and FlgB, FlgC and FlgF are thought to build up the proximal portion of the rod with about 6 subunits each.

Its subcellular location is the bacterial flagellum basal body. The protein is Flagellar basal-body rod protein FlgC (flgC) of Borrelia hermsii.